We begin with the raw amino-acid sequence, 138 residues long: Trypsin inhibitor DE5 alpha chain (138 aa).

An intrachain disulfide couples Cys-40 to Cys-86.

It belongs to the protease inhibitor I3 (leguminous Kunitz-type inhibitor) family. As to quaternary structure, heterodimer of an alpha and a beta chain linked by a disulfide bond.

Functionally, inhibition of trypsin. The sequence is that of Trypsin inhibitor DE5 alpha chain from Adenanthera pavonina (Sandal bead tree).